A 130-amino-acid chain; its full sequence is Secreted cysteine-rich effector 2 (130 aa).

The first 23 residues, 1-23 (MLINAARLLLPAAALVHLSLAWA), serve as a signal peptide directing secretion. Positions 68 to 85 (LKNGEDWCKHCASPRVSV) are plant immunity suppression domain.

Its subcellular location is the secreted. It is found in the host cell. The protein localises to the host periplasm. Its function is as follows. Secreted effector required for full virulence of U.virens. Inhibits host pathogen-associated molecular pattern-triggered immunity including flg22- and chitin-induced defense gene expression and oxidative burst. The polypeptide is Secreted cysteine-rich effector 2 (Ustilaginoidea virens (Rice false smut fungus)).